Reading from the N-terminus, the 527-residue chain is Eukaryotic translation initiation factor 4B1 (527 aa).

2 disordered regions span residues 1–370 (MAKP…REVV) and 453–527 (FGQR…RQGW). Low complexity-rich tracts occupy residues 35-45 (AAAGGAASFPS) and 74-85 (GAAGAPRRVAPA). 2 stretches are compositionally biased toward basic and acidic residues: residues 102–155 (PRER…DNWG) and 181–194 (RSDD…DKKP). Residues 196-203 (PSRYPSLG) carry the Nuclear localization signal motif. The segment covering 203–232 (GTGGGFRESSGGGFRESSGGGFRESSGGGF) has biased composition (gly residues). Residues 293-317 (KPREEVLAEKGLDWRKMEGEIEKKT) show a composition bias toward basic and acidic residues. Positions 319 to 336 (RPTSSHSSRPNSAHSSRP) are enriched in low complexity. 2 stretches are compositionally biased toward basic and acidic residues: residues 472-485 (EEPH…DRPR) and 496-510 (PVEE…RERG). The span at 518–527 (SDRSSTRQGW) shows a compositional bias: low complexity.

Belongs to the eIF-4 subunit B family. In terms of assembly, homodimer. Nonspherical monomer. mRNA-discriminating component of initiation complexes. In terms of processing, phosphorylated.

The protein localises to the nucleus. Promotes the eIF4F and eIF4A RNA-dependent ATP-hydrolysis activity with different efficiency depending on mRNAs, thus providing mRNA discrimination during initiation of translation. This is Eukaryotic translation initiation factor 4B1 from Triticum aestivum (Wheat).